Here is a 330-residue protein sequence, read N- to C-terminus: Aspartate--ammonia ligase (330 aa).

Belongs to the class-II aminoacyl-tRNA synthetase family. AsnA subfamily.

The protein resides in the cytoplasm. It catalyses the reaction L-aspartate + NH4(+) + ATP = L-asparagine + AMP + diphosphate + H(+). It functions in the pathway amino-acid biosynthesis; L-asparagine biosynthesis; L-asparagine from L-aspartate (ammonia route): step 1/1. The polypeptide is Aspartate--ammonia ligase (Haemophilus influenzae (strain 86-028NP)).